A 604-amino-acid polypeptide reads, in one-letter code: Protein TAX4 (604 aa).

5 disordered regions span residues 38 to 77, 132 to 249, 267 to 299, 338 to 380, and 394 to 428; these read HPNGNAGSAERPRHLKVESAPVVKSEPSLPRMRQPEPRSI, SFSN…RQQE, GTLPDLIPRSQRKTSKPRFKHRLLRSPEQQQEN, DETF…KGLK, and PFPHHHHHHHQLHNPNSHHLHTHHHTSSHKFNEDK. Polar residues predominate over residues 176 to 185; that stretch reads YDNNVRSRSI. Composition is skewed to low complexity over residues 186–203 and 224–240; these read SPQVSYSTSLSSSCSISS and SMSSYSLASKASAKASL. 3 stretches are compositionally biased toward basic residues: residues 276–290, 366–379, and 396–421; these read SQRKTSKPRFKHRLL, KKKKSRRSKIKKGL, and PHHHHHHHQLHNPNSHHLHTHHHTSS. Residues 469-559 form the EH domain; it reads ANEDDESHLQ…RVWNSVDGYV (91 aa).

The protein belongs to the IRS4 family. In terms of assembly, interacts with INP51.

Functionally, with IRS4, acts as a positive regulator of INP51 activity and phosphatidylinositol 4,5-bisphosphate turnover. Negatively regulates signaling through the cell integrity pathway, including the MAP kinase SLT2. This is Protein TAX4 (TAX4) from Saccharomyces cerevisiae (strain ATCC 204508 / S288c) (Baker's yeast).